Reading from the N-terminus, the 280-residue chain is UPF0758 protein Atu1607 (280 aa).

Residues Met1–Glu22 are disordered. The MPN domain maps to Val158–Ile280. Residues His229, His231, and Asp242 each coordinate Zn(2+). A JAMM motif motif is present at residues His229–Asp242.

It belongs to the UPF0758 family.

This is UPF0758 protein Atu1607 from Agrobacterium fabrum (strain C58 / ATCC 33970) (Agrobacterium tumefaciens (strain C58)).